The following is a 977-amino-acid chain: Poly [ADP-ribose] polymerase 1 (977 aa).

PARP-type zinc fingers lie at residues 8 to 91 and 104 to 179; these read WKAE…GSAP and CTIE…KKDA. Positions 20, 23, 52, 55, 116, 119, 141, and 144 each coordinate Zn(2+). Disordered stretches follow at residues 177–199 and 218–237; these read KDAP…QNDI and DKGK…DLQE. The region spanning 227–365 is the PADR1 zinc-binding domain; the sequence is DSNANSSDLQ…AKKPERVLPP (139 aa). The SAP domain maps to 254–288; sequence KKHVSTAELRNMLEANGQDTSGPERHLLDRCADGM. The interval 291–335 is zinc ribbon; it reads GALGTCPVCSSFLYYHGGQYHCSGYVSEWSKCTYSTTEPVRSKKK. The Zn(2+) site is built by C296, C299, C312, and C322. One can recognise a BRCT domain in the interval 381 to 473; it reads SFLSEGLDKL…RVLPFDLYKV (93 aa). The WGR domain occupies 504–604; it reads TGHILEDGKS…TNFQKQPGKF (101 aa). The 120-residue stretch at 626-745 folds into the PARP alpha-helical domain; that stretch reads KSSLPPQLLE…DIEIASKLVG (120 aa). Residues 752-977 form the PARP catalytic domain; that stretch reads ESLDDKYKKL…LLKVRFHHKR (226 aa).

Belongs to the ARTD/PARP family.

The protein resides in the nucleus. The catalysed reaction is NAD(+) + (ADP-D-ribosyl)n-acceptor = nicotinamide + (ADP-D-ribosyl)n+1-acceptor + H(+).. The enzyme catalyses L-aspartyl-[protein] + NAD(+) = 4-O-(ADP-D-ribosyl)-L-aspartyl-[protein] + nicotinamide. It carries out the reaction L-glutamyl-[protein] + NAD(+) = 5-O-(ADP-D-ribosyl)-L-glutamyl-[protein] + nicotinamide. Functionally, involved in the base excision repair (BER) pathway, by catalyzing the poly(ADP-ribosyl)ation of a limited number of acceptor proteins involved in chromatin architecture and in DNA metabolism. This modification follows DNA damages and appears as an obligatory step in a detection/signaling pathway leading to the reparation of DNA strand breaks. In Oryza sativa subsp. japonica (Rice), this protein is Poly [ADP-ribose] polymerase 1 (PARP1).